The primary structure comprises 121 residues: uncharacterized protein (121 aa).

The protein to M.jannaschii MJ0989.

This is an uncharacterized protein from Methanopyrus kandleri (strain AV19 / DSM 6324 / JCM 9639 / NBRC 100938).